Reading from the N-terminus, the 478-residue chain is Cytochrome c-552 (478 aa).

The signal sequence occupies residues 1–26 (MTRIKINARRIFSLLIPFFFFTSVHA). His94 is a heme c binding site. Heme-binding residues include Cys122, Cys125, and Lys126. Residues Cys160, Cys163, His164, Cys209, Cys212, and His213 each coordinate heme c. Residues Glu215, Tyr216, Lys261, and Gln263 each coordinate Ca(2+). Tyr216 is a substrate binding site. A substrate-binding site is contributed by His264. Heme c-binding residues include His275, Cys282, Cys285, His286, His301, Cys314, Cys317, His318, and His393.

It belongs to the cytochrome c-552 family. Ca(2+) is required as a cofactor. It depends on heme c as a cofactor.

The protein resides in the periplasm. The enzyme catalyses 6 Fe(III)-[cytochrome c] + NH4(+) + 2 H2O = 6 Fe(II)-[cytochrome c] + nitrite + 8 H(+). Its pathway is nitrogen metabolism; nitrate reduction (assimilation). Catalyzes the reduction of nitrite to ammonia, consuming six electrons in the process. The sequence is that of Cytochrome c-552 from Escherichia coli O9:H4 (strain HS).